The following is a 267-amino-acid chain: MAKSLVLSSLLLALLLAAPLASLADNNVLLTGDVLHTDNQLSFESAAFVMQGDCNLVLYNEAGGFQSNTHGRGVGCTLRLNNFGQLEIHSANSNTPVWVSLRNGIPVRGDYAAVLGPDQHVTIYGPAIWSTPAPNRHERGATVSNIPRVRNVLFSSQVMSDNAQLATRDYSLVMRDDCNLALTKGSKTNIVWESGTSGRGQHCFMRLGHTGLIEISDDRLNTVWRSNTVGQEGDYVLILQINGQAVVYGPAVWSTASPARGGASAAL.

The first 24 residues, 1 to 24, serve as a signal peptide directing secretion; the sequence is MAKSLVLSSLLLALLLAAPLASLA. Bulb-type lectin domains are found at residues 26-136 and 150-260; these read NNVL…APNR and RNVL…SPAR. 2 disulfides stabilise this stretch: C54-C76 and C178-C203.

Heterotetramer of 2 domain 1 and 2 domain 2 chains arranged as a dimer of domain 1/domain 2 heterodimers.

In terms of biological role, mannose-specific lectin. Has weak agglutinating activity towards trypsin-treated erythrocytes from rabbit but not from human. This is Mannose-specific lectin 1 from Crocus vernus (Dutch crocus).